The primary structure comprises 639 residues: tRNA (uracil(54)-C(5))-methyltransferase (639 aa).

A disordered region spans residues 78–113; sequence VPPTMKHTVDNKRLSSPLTDSGNRRTKKPKLRKYKA. S92 and S93 each carry phosphoserine. Over residues 101–113 the composition is skewed to basic residues; sequence RRTKKPKLRKYKA. The 66-residue stretch at 163–228 folds into the TRAM domain; that stretch reads LQYHREVKNV…PYYVESDLLD (66 aa). Q461, Y496, E517, and D564 together coordinate S-adenosyl-L-methionine. The active-site Nucleophile is C591. E631 (proton acceptor) is an active-site residue.

Belongs to the class I-like SAM-binding methyltransferase superfamily. RNA M5U methyltransferase family.

It carries out the reaction uridine(54) in tRNA + S-adenosyl-L-methionine = 5-methyluridine(54) in tRNA + S-adenosyl-L-homocysteine + H(+). Functionally, catalyzes the formation of 5-methyl-uridine at position 54 (m5U54) in all tRNA. May also have a role in tRNA stabilization or maturation. The protein is tRNA (uracil(54)-C(5))-methyltransferase (TRM2) of Saccharomyces cerevisiae (strain ATCC 204508 / S288c) (Baker's yeast).